The chain runs to 309 residues: MSIRIIPQDELGSSEKRTADMIPPLLFPRLKNVYNRRAERLRELAENNPLGDYLRFAALIAHAQEVVLYDHPLEMDLTARIKEANDQGKPPLDIHVLPRDKHWQKLLHSLIAELKPEMSGPALAVIENLEKASEQELEQMASALFASDFASVSSDKAPFIWAALSLYWAQMASLIPGKARAEYGEARQYCPVCGSMPVSSMVQISTTQGLRYLHCNLCETEWHVVRVKCSNCEQSRDLHYWSLENEQAAVKAESCGDCGTYLKILYQEKDPKVEAVADDLASLVLDARMEQEGFARSSINPFLFPGEGE.

Belongs to the FdhE family.

The protein resides in the cytoplasm. In terms of biological role, necessary for formate dehydrogenase activity. This is Protein FdhE from Salmonella choleraesuis (strain SC-B67).